Consider the following 895-residue polypeptide: Cellulose 1,4-beta-cellobiosidase (895 aa).

The signal sequence occupies residues 1 to 27; the sequence is MNFRRMLCAAIVLTIVLSIMLPSTVFA. The 160-residue stretch at 40–199 folds into the CBM-cenC domain; the sequence is NDLLYERTFD…YLDDVSLYDP (160 aa). Residues 199 to 240 form a linker region; it reads PRFVKPVEYVLPQPDVRVNQVGYLPFAKKYATVVSSSTSPLK. A catalytic region spans residues 241 to 815; sequence WQLLNSANQV…WVTAYLDEID (575 aa). Asp386 functions as the Nucleophile in the catalytic mechanism. Active-site residues include His737, Asp786, and Glu795. In terms of domain architecture, Dockerin spans 828–894; it reads PEVIYGDCNG…ILKEIDVLPH (67 aa).

Belongs to the glycosyl hydrolase 9 (cellulase E) family.

Its subcellular location is the secreted. It catalyses the reaction Hydrolysis of (1-&gt;4)-beta-D-glucosidic linkages in cellulose and cellotetraose, releasing cellobiose from the non-reducing ends of the chains.. Inhibited by cellobiose. This is Cellulose 1,4-beta-cellobiosidase (celK) from Acetivibrio thermocellus (Hungateiclostridium thermocellum).